The chain runs to 459 residues: Phosphomethylpyrimidine synthase (459 aa).

Residues asparagine 80, methionine 109, tyrosine 139, histidine 175, serine 195–glycine 197, aspartate 236–arginine 239, and glutamate 275 contribute to the substrate site. Residue histidine 279 coordinates Zn(2+). Tyrosine 302 lines the substrate pocket. Zn(2+) is bound at residue histidine 343. 3 residues coordinate [4Fe-4S] cluster: cysteine 423, cysteine 426, and cysteine 431.

Belongs to the ThiC family. [4Fe-4S] cluster is required as a cofactor.

The enzyme catalyses 5-amino-1-(5-phospho-beta-D-ribosyl)imidazole + S-adenosyl-L-methionine = 4-amino-2-methyl-5-(phosphooxymethyl)pyrimidine + CO + 5'-deoxyadenosine + formate + L-methionine + 3 H(+). The protein operates within cofactor biosynthesis; thiamine diphosphate biosynthesis. Its function is as follows. Catalyzes the synthesis of the hydroxymethylpyrimidine phosphate (HMP-P) moiety of thiamine from aminoimidazole ribotide (AIR) in a radical S-adenosyl-L-methionine (SAM)-dependent reaction. This is Phosphomethylpyrimidine synthase from Gloeothece citriformis (strain PCC 7424) (Cyanothece sp. (strain PCC 7424)).